A 159-amino-acid chain; its full sequence is Ribosomal RNA large subunit methyltransferase H (159 aa).

S-adenosyl-L-methionine contacts are provided by residues L76, G108, and 127–132; that span reads FSKMTL.

This sequence belongs to the RNA methyltransferase RlmH family. As to quaternary structure, homodimer.

The protein resides in the cytoplasm. The catalysed reaction is pseudouridine(1915) in 23S rRNA + S-adenosyl-L-methionine = N(3)-methylpseudouridine(1915) in 23S rRNA + S-adenosyl-L-homocysteine + H(+). In terms of biological role, specifically methylates the pseudouridine at position 1915 (m3Psi1915) in 23S rRNA. This chain is Ribosomal RNA large subunit methyltransferase H, found in Bacillus cytotoxicus (strain DSM 22905 / CIP 110041 / 391-98 / NVH 391-98).